Consider the following 277-residue polypeptide: MSVNSPVRPVMAADILARKGGEPIVCLTAYTTPMARLVDAHCDLTLVGDSLGMVVHGLPTTLGVTMEMMILHGQAVARGTSRSMLVVDMPFGSYEESPAQAFANARRLMAETGCAAVKLEGGQHMAETIRFLVARGVPVMAHIGLTPQAVNALGGYKVQGRGADAERVMEDAIAVAEAGAFSVVLEKVPDGLSQRITQRIAIPTIGIGASAHCDGQVLVLDDMLGLFADFRPKFVKRYGELGASADEAIATYAAEVRARRFPAPEHVFADELKGKAQ.

2 residues coordinate Mg(2+): Asp49 and Asp88. Residues 49–50, Asp88, and Lys118 each bind 3-methyl-2-oxobutanoate; that span reads DS. Glu120 is a binding site for Mg(2+). Glu186 acts as the Proton acceptor in catalysis.

Belongs to the PanB family. As to quaternary structure, homodecamer; pentamer of dimers. The cofactor is Mg(2+).

It is found in the cytoplasm. The enzyme catalyses 3-methyl-2-oxobutanoate + (6R)-5,10-methylene-5,6,7,8-tetrahydrofolate + H2O = 2-dehydropantoate + (6S)-5,6,7,8-tetrahydrofolate. Its pathway is cofactor biosynthesis; (R)-pantothenate biosynthesis; (R)-pantoate from 3-methyl-2-oxobutanoate: step 1/2. In terms of biological role, catalyzes the reversible reaction in which hydroxymethyl group from 5,10-methylenetetrahydrofolate is transferred onto alpha-ketoisovalerate to form ketopantoate. In Cereibacter sphaeroides (strain ATCC 17029 / ATH 2.4.9) (Rhodobacter sphaeroides), this protein is 3-methyl-2-oxobutanoate hydroxymethyltransferase.